Here is a 290-residue protein sequence, read N- to C-terminus: Arylamine N-acetyltransferase 1 (290 aa).

Met-1 is subject to N-acetylmethionine. Cys-68 serves as the catalytic Acyl-thioester intermediate. Residue Ser-103 coordinates CoA. 106–107 (VH) serves as a coordination point for substrate. Residues His-107 and Asp-122 contribute to the active site. Residue Tyr-208 coordinates CoA.

Belongs to the arylamine N-acetyltransferase family.

It localises to the cytoplasm. The enzyme catalyses an arylamine + acetyl-CoA = an N-acetylarylamine + CoA. In terms of biological role, participates in the detoxification of a plethora of hydrazine and arylamine drugs. Isoniazid, 2-aminofluorene and anisidine are preferred substrates for NAT-1. No activity with p-aminobenzoic acid (PABA) nor SMZ. The protein is Arylamine N-acetyltransferase 1 (Nat1) of Mus musculus (Mouse).